A 209-amino-acid polypeptide reads, in one-letter code: Small ribosomal subunit protein uS4 (209 aa).

The region spanning 98 to 164 is the S4 RNA-binding domain; sequence SRLDNVVYRG…TPFIVARETA (67 aa).

The protein belongs to the universal ribosomal protein uS4 family. In terms of assembly, part of the 30S ribosomal subunit. Contacts protein S5. The interaction surface between S4 and S5 is involved in control of translational fidelity.

In terms of biological role, one of the primary rRNA binding proteins, it binds directly to 16S rRNA where it nucleates assembly of the body of the 30S subunit. Its function is as follows. With S5 and S12 plays an important role in translational accuracy. This is Small ribosomal subunit protein uS4 from Frankia alni (strain DSM 45986 / CECT 9034 / ACN14a).